Consider the following 307-residue polypeptide: Methionyl-tRNA formyltransferase (307 aa).

109–112 (SLLP) serves as a coordination point for (6S)-5,6,7,8-tetrahydrofolate.

It belongs to the Fmt family.

It carries out the reaction L-methionyl-tRNA(fMet) + (6R)-10-formyltetrahydrofolate = N-formyl-L-methionyl-tRNA(fMet) + (6S)-5,6,7,8-tetrahydrofolate + H(+). Attaches a formyl group to the free amino group of methionyl-tRNA(fMet). The formyl group appears to play a dual role in the initiator identity of N-formylmethionyl-tRNA by promoting its recognition by IF2 and preventing the misappropriation of this tRNA by the elongation apparatus. In Mycobacteroides abscessus (strain ATCC 19977 / DSM 44196 / CCUG 20993 / CIP 104536 / JCM 13569 / NCTC 13031 / TMC 1543 / L948) (Mycobacterium abscessus), this protein is Methionyl-tRNA formyltransferase.